The sequence spans 455 residues: Phosphoglucosamine mutase (455 aa).

Ser-107 serves as the catalytic Phosphoserine intermediate. Mg(2+) is bound by residues Ser-107, Asp-247, Asp-249, and Asp-251. Position 107 is a phosphoserine (Ser-107).

This sequence belongs to the phosphohexose mutase family. Mg(2+) serves as cofactor. Activated by phosphorylation.

It catalyses the reaction alpha-D-glucosamine 1-phosphate = D-glucosamine 6-phosphate. Catalyzes the conversion of glucosamine-6-phosphate to glucosamine-1-phosphate. The polypeptide is Phosphoglucosamine mutase (Leuconostoc citreum (strain KM20)).